Reading from the N-terminus, the 524-residue chain is Cytochrome P450 monooxygenase lnaC (524 aa).

A helical transmembrane segment spans residues 16 to 36 (ALAVSCIAVSLFLLSPWIAYA). Asn-150 carries N-linked (GlcNAc...) asparagine glycosylation. Cys-471 contributes to the heme binding site.

This sequence belongs to the cytochrome P450 family. Heme is required as a cofactor.

Its subcellular location is the membrane. It functions in the pathway secondary metabolite biosynthesis. Its function is as follows. Cytochrome P450 monooxygenase; part of the lna gene cluster that mediates the biosynthesis of diastereomeric piperazines. Lna and lnb clusters encode sets of enzymes that produce overlapping sets of previously undescribed metabolites such as piperazinomycin-like metabolites or morpholine. The lna and lnb biosynthetic pathways appear to be part of a signaling network that controls the formation of sclerotia, a resilient overwintering structure. One primary function of the non-canonical nonribosomal peptide synthetases lnaA and lnbA consists in the reduction of L-tyrosine. The presence in the clusters of tailoring enzymes such as the oxidoreductases lnaB, lnbB, lnaE or lnbE, as well as of the cytochrome P450 monooxygenases lnaC, lnaD, or lnbC, might explain formation of various diastereomeric piperazines. This Aspergillus flavus (strain ATCC 200026 / FGSC A1120 / IAM 13836 / NRRL 3357 / JCM 12722 / SRRC 167) protein is Cytochrome P450 monooxygenase lnaC.